Consider the following 418-residue polypeptide: Voltage-gated ClC-type chloride channel ClcB (418 aa).

The next 10 membrane-spanning stretches (helical) occupy residues 5–25 (LLIA…FRHA), 54–74 (LLTP…WQKF), 146–166 (LWIA…PLAG), 168–188 (LFIA…PVII), 222–242 (ALII…LTLM), 260–280 (LALG…VWGN), 291–311 (APPL…AVLA), 316–336 (GAPG…GMLY), 352–372 (LLLG…APIM), and 380–400 (MTGE…ASVI).

This sequence belongs to the chloride channel (TC 2.A.49) family. ClcB subfamily.

The protein resides in the cell inner membrane. Probably acts as an electrical shunt for an outwardly-directed proton pump that is linked to amino acid decarboxylation, as part of the extreme acid resistance (XAR) response. This chain is Voltage-gated ClC-type chloride channel ClcB, found in Escherichia coli O9:H4 (strain HS).